We begin with the raw amino-acid sequence, 100 residues long: Urease subunit gamma (100 aa).

Belongs to the urease gamma subunit family. In terms of assembly, heterotrimer of UreA (gamma), UreB (beta) and UreC (alpha) subunits. Three heterotrimers associate to form the active enzyme.

It is found in the cytoplasm. The enzyme catalyses urea + 2 H2O + H(+) = hydrogencarbonate + 2 NH4(+). Its pathway is nitrogen metabolism; urea degradation; CO(2) and NH(3) from urea (urease route): step 1/1. The chain is Urease subunit gamma from Staphylococcus aureus (strain N315).